The sequence spans 245 residues: Epoxyqueuosine reductase QueH (245 aa).

Residues cysteine 52, cysteine 53, cysteine 131, and cysteine 134 each coordinate [4Fe-4S] cluster. An intrachain disulfide couples cysteine 214 to cysteine 216.

The protein belongs to the QueH family.

The catalysed reaction is epoxyqueuosine(34) in tRNA + AH2 = queuosine(34) in tRNA + A + H2O. It participates in tRNA modification; tRNA-queuosine biosynthesis. Functionally, catalyzes the conversion of epoxyqueuosine (oQ) to queuosine (Q), which is a hypermodified base found in the wobble positions of tRNA(Asp), tRNA(Asn), tRNA(His) and tRNA(Tyr). The polypeptide is Epoxyqueuosine reductase QueH (Haemophilus influenzae (strain ATCC 51907 / DSM 11121 / KW20 / Rd)).